The chain runs to 415 residues: Multidrug resistance protein MdtA (415 aa).

Positions 1–21 (MKGSYKSRWVIVIVVVIAAIA) are cleaved as a signal peptide. Positions 31–46 (DSQSAAPGATKQAQQS) are enriched in polar residues. Disordered regions lie at residues 31 to 56 (DSQSAAPGATKQAQQSPAGGRRGMRA) and 391 to 415 (VEAQSTTTPEEKATSREYAKKGARS). The segment covering 399-415 (PEEKATSREYAKKGARS) has biased composition (basic and acidic residues).

This sequence belongs to the membrane fusion protein (MFP) (TC 8.A.1) family. As to quaternary structure, part of a tripartite efflux system composed of MdtA, MdtB and MdtC.

The protein localises to the cell inner membrane. Functionally, the MdtABC tripartite complex confers resistance against novobiocin and deoxycholate. The sequence is that of Multidrug resistance protein MdtA from Escherichia coli O45:K1 (strain S88 / ExPEC).